The primary structure comprises 148 residues: Transcriptional regulator MraZ (148 aa).

SpoVT-AbrB domains follow at residues 5–51 (STQL…PQPV) and 80–123 (ASDV…DMAK).

It belongs to the MraZ family. In terms of assembly, forms oligomers.

The protein localises to the cytoplasm. Its subcellular location is the nucleoid. The protein is Transcriptional regulator MraZ of Nitrosomonas europaea (strain ATCC 19718 / CIP 103999 / KCTC 2705 / NBRC 14298).